A 331-amino-acid chain; its full sequence is Ketol-acid reductoisomerase (NADP(+)) (331 aa).

A KARI N-terminal Rossmann domain is found at 2-182 (ARMYYDEDAN…GGTRGGVLET (181 aa)). Residues 25–28 (YGSQ), Ser-51, Ser-53, and 83–86 (DEVQ) each bind NADP(+). The active site involves His-108. NADP(+) is bound at residue Gly-134. A KARI C-terminal knotted domain is found at 183–328 (TFREETETDL…KDLRAMFSWL (146 aa)). Residues Asp-191, Glu-195, Glu-227, and Glu-231 each contribute to the Mg(2+) site. Ser-252 contacts substrate.

Belongs to the ketol-acid reductoisomerase family. The cofactor is Mg(2+).

The enzyme catalyses (2R)-2,3-dihydroxy-3-methylbutanoate + NADP(+) = (2S)-2-acetolactate + NADPH + H(+). It catalyses the reaction (2R,3R)-2,3-dihydroxy-3-methylpentanoate + NADP(+) = (S)-2-ethyl-2-hydroxy-3-oxobutanoate + NADPH + H(+). Its pathway is amino-acid biosynthesis; L-isoleucine biosynthesis; L-isoleucine from 2-oxobutanoate: step 2/4. It functions in the pathway amino-acid biosynthesis; L-valine biosynthesis; L-valine from pyruvate: step 2/4. In terms of biological role, involved in the biosynthesis of branched-chain amino acids (BCAA). Catalyzes an alkyl-migration followed by a ketol-acid reduction of (S)-2-acetolactate (S2AL) to yield (R)-2,3-dihydroxy-isovalerate. In the isomerase reaction, S2AL is rearranged via a Mg-dependent methyl migration to produce 3-hydroxy-3-methyl-2-ketobutyrate (HMKB). In the reductase reaction, this 2-ketoacid undergoes a metal-dependent reduction by NADPH to yield (R)-2,3-dihydroxy-isovalerate. The polypeptide is Ketol-acid reductoisomerase (NADP(+)) (Trichormus variabilis (strain ATCC 29413 / PCC 7937) (Anabaena variabilis)).